We begin with the raw amino-acid sequence, 837 residues long: A disintegrin and metalloproteinase with thrombospondin motifs 4 (837 aa).

The N-terminal stretch at 1 to 51 (MSQTGSHPGRGLAGRWLWGAQPCLLLPIVPLSWLVWLLLLLLASLLPSARL) is a signal peptide. The propeptide occupies 52-212 (ASPLPREEEI…PSPRPRRAKR (161 aa)). N-linked (GlcNAc...) asparagine glycosylation occurs at N68. The disordered stretch occupies residues 166–191 (EGGTPNSAGGPGAHILRRKSPASGQG). The short motif at 192-199 (PMCNVKAP) is the Cysteine switch element. C194 is a Zn(2+) binding site. The Peptidase M12B domain maps to 218–428 (RFVETLVVAD…GYGHCLLDKP (211 aa)). 11 disulfides stabilise this stretch: C293/C345, C322/C327, C339/C423, C377/C407, C449/C472, C460/C482, C467/C501, C495/C506, C532/C569, C536/C574, and C547/C559. Zn(2+) is bound at residue H361. Residue E362 is part of the active site. Zn(2+)-binding residues include H365 and H371. The region spanning 437–519 (TFPGKDYDAD…DQLQDFNIPQ (83 aa)) is the Disintegrin domain. In terms of domain architecture, TSP type-1 spans 520 to 575 (AGGWGPWGPWGDCSRTCGGGVQFSSRDCTRPVPRNGGKYCEGRRTRFRSCNTEDCP). A spacer region spans residues 686–837 (SKQSGSFRKF…LRRRPWVGRK (152 aa)).

Interacts with SRPX2. Requires Zn(2+) as cofactor. Post-translationally, the precursor is cleaved by a furin endopeptidase. Glycosylated. Can be O-fucosylated by POFUT2 on a serine or a threonine residue found within the consensus sequence C1-X(2)-(S/T)-C2-G of the TSP type-1 repeat domains where C1 and C2 are the first and second cysteine residue of the repeat, respectively. Fucosylated repeats can then be further glycosylated by the addition of a beta-1,3-glucose residue by the glucosyltransferase, B3GALTL. Fucosylation mediates the efficient secretion of ADAMTS family members. Can also be C-glycosylated with one or two mannose molecules on tryptophan residues within the consensus sequence W-X-X-W of the TPRs, and N-glycosylated. These other glycosylations can also facilitate secretion.

It localises to the secreted. It is found in the extracellular space. The protein resides in the extracellular matrix. The catalysed reaction is Glutamyl endopeptidase. Bonds cleaved include 370-Thr-Glu-Gly-Glu-|-Ala-Arg-Gly-Ser-377 in the interglobular domain of mammalian aggrecan.. Its function is as follows. Cleaves aggrecan, a cartilage proteoglycan, at the '392-Glu-|-Ala-393' site and may be involved in its turnover. Also cleaves COMP. May play an important role in the destruction of aggrecan in arthritic diseases. This Pongo abelii (Sumatran orangutan) protein is A disintegrin and metalloproteinase with thrombospondin motifs 4 (ADAMTS4).